The following is a 79-amino-acid chain: Translational regulator CsrA (79 aa).

It belongs to the CsrA/RsmA family. As to quaternary structure, homodimer; the beta-strands of each monomer intercalate to form a hydrophobic core, while the alpha-helices form wings that extend away from the core.

It localises to the cytoplasm. Its function is as follows. A translational regulator that binds mRNA to regulate translation initiation and/or mRNA stability. Usually binds in the 5'-UTR at or near the Shine-Dalgarno sequence preventing ribosome-binding, thus repressing translation. Its main target seems to be the major flagellin gene, while its function is anatagonized by FliW. The protein is Translational regulator CsrA of Syntrophus aciditrophicus (strain SB).